The sequence spans 91 residues: Signal peptidase complex subunit 1 (91 aa).

The Cytoplasmic segment spans residues 1–28 (MEIFNDLSRKLVFPIDYPSQRRVAKLTD). Residues 29-48 (IILGSGTLVSCLLGFYAGSL) traverse the membrane as a helical segment. Residues 49-51 (SLT) lie on the Lumenal side of the membrane. Residues 52–71 (LYAFAAAYGLALLLVVPAYG) traverse the membrane as a helical segment. The Cytoplasmic portion of the chain corresponds to 72-91 (KYRQQKLAWVGSAAATTKDL).

Belongs to the SPCS1 family. In terms of assembly, component of the signal peptidase complex (SPC) composed of a catalytic subunit SEC11 and three accessory subunits SPC1, SPC2 and SPC3. The complex induces a local thinning of the ER membrane which is used to measure the length of the signal peptide (SP) h-region of protein substrates. This ensures the selectivity of the complex towards h-regions shorter than 18-20 amino acids. SPC associates with the translocon complex.

The protein localises to the endoplasmic reticulum membrane. Component of the signal peptidase complex (SPC) which catalyzes the cleavage of N-terminal signal sequences from nascent proteins as they are translocated into the lumen of the endoplasmic reticulum. Dispensable for SPC enzymatic activity. The chain is Signal peptidase complex subunit 1 (SPC1) from Eremothecium gossypii (strain ATCC 10895 / CBS 109.51 / FGSC 9923 / NRRL Y-1056) (Yeast).